The chain runs to 68 residues: Large ribosomal subunit protein bL32 (68 aa).

Positions 1 to 20 are disordered; it reads MAVQQNKVSKSRRNNRRAHD.

Belongs to the bacterial ribosomal protein bL32 family.

In Ruegeria sp. (strain TM1040) (Silicibacter sp.), this protein is Large ribosomal subunit protein bL32.